Consider the following 481-residue polypeptide: Ribosomal RNA small subunit methyltransferase F (481 aa).

S-adenosyl-L-methionine-binding positions include 125-131, E149, D176, and D194; that span reads AAAPGSK. The active-site Nucleophile is C247.

Belongs to the class I-like SAM-binding methyltransferase superfamily. RsmB/NOP family.

Its subcellular location is the cytoplasm. The enzyme catalyses cytidine(1407) in 16S rRNA + S-adenosyl-L-methionine = 5-methylcytidine(1407) in 16S rRNA + S-adenosyl-L-homocysteine + H(+). In terms of biological role, specifically methylates the cytosine at position 1407 (m5C1407) of 16S rRNA. The chain is Ribosomal RNA small subunit methyltransferase F from Psychromonas ingrahamii (strain DSM 17664 / CCUG 51855 / 37).